The sequence spans 215 residues: Cytochrome c biogenesis ATP-binding export protein CcmA (215 aa).

Positions Leu-3–Ala-215 constitute an ABC transporter domain. Residue Gly-35–Ser-42 coordinates ATP.

This sequence belongs to the ABC transporter superfamily. CcmA exporter (TC 3.A.1.107) family. As to quaternary structure, the complex is composed of two ATP-binding proteins (CcmA) and two transmembrane proteins (CcmB).

The protein localises to the cell inner membrane. It catalyses the reaction heme b(in) + ATP + H2O = heme b(out) + ADP + phosphate + H(+). In terms of biological role, part of the ABC transporter complex CcmAB involved in the biogenesis of c-type cytochromes; once thought to export heme, this seems not to be the case, but its exact role is uncertain. Responsible for energy coupling to the transport system. This is Cytochrome c biogenesis ATP-binding export protein CcmA from Brucella abortus (strain 2308).